Here is a 338-residue protein sequence, read N- to C-terminus: Serpentine receptor class alpha-31 (338 aa).

7 consecutive transmembrane segments (helical) span residues 23-43 (GNHCFILLIIISSVFLTVFAI), 59-79 (LLFSAIINGVVHHWSIAGIRI), 108-125 (LYYYTNLFSSLCCISLFF), 142-162 (FSKIFLLFQSISPFGILYWIF), 188-208 (VNEFRLYILGTFFVLSFVIFF), 240-260 (VCIIIATQITCLVTTASTTEI), and 276-296 (SIAFMTGLTYSNFFLPIIIIY).

The protein belongs to the nematode receptor-like protein sra family.

It is found in the membrane. In Caenorhabditis elegans, this protein is Serpentine receptor class alpha-31 (sra-31).